Consider the following 449-residue polypeptide: MSRTWIRNPLAIFTANGLDAAGGLVVEDGRIVELLGAGQQPAQPCASQFDASRHVVLPGLVNTHHHFYQTLTRAWAPVVNQPLFPWLKTLYPVWARLTPEKLELATKVALAELLLSGCTTAADHHYLFPGGLEQAIDVQAGVVEELGMRAMLTRGSMSLGEKDGGLPPQQTVQEAETILADSERLIARYHQRGDGARVQIALAPCSPFSVTPEIMRASAEVAARHDVRLHTHLAETLDEEDFCLQRFGLRTVDYLDSVGWLGPRTWLAHGIHFNAEEIRRLGEAGTGICHCPSSNMRLASGICPTVELEAAGAPIGLGVDGSASNDASNMILEARQALYLQRLRYGAERITPELALGWATRGSARLLGRSDIGELAPGKQADLALFKLDELRFSGSHDPLSALLLCAADRADRVMVGGAWRVVDGAVEGLDLAALIARHRAAASALIAG.

His-64 and His-66 together coordinate Zn(2+). Gln-69 lines the substrate pocket. His-232 contacts Zn(2+). Positions 235 and 269 each coordinate substrate. The Zn(2+) site is built by His-269 and Asp-320.

This sequence belongs to the metallo-dependent hydrolases superfamily. ATZ/TRZ family. Homodimer. Zn(2+) is required as a cofactor.

It carries out the reaction 8-oxoguanine + H2O + H(+) = urate + NH4(+). It participates in purine metabolism. Its function is as follows. Specifically deaminates 8-Oxoguanine (8-oxoG) to uric acid. 8-oxoG is formed via the oxidation of guanine within DNA by reactive oxygen species and leads, if uncorrected, to the incorporation of 8-oxoG:A mismatches and eventually to G:C to T:A transversions. The polypeptide is 8-oxoguanine deaminase (Pseudomonas aeruginosa (strain ATCC 15692 / DSM 22644 / CIP 104116 / JCM 14847 / LMG 12228 / 1C / PRS 101 / PAO1)).